The primary structure comprises 350 residues: Chorismate synthase (350 aa).

NADP(+)-binding residues include arginine 39 and arginine 45. Residues 119 to 121 (RSS), 213 to 214 (QA), glycine 258, 273 to 277 (KPIPT), and arginine 299 each bind FMN.

Belongs to the chorismate synthase family. In terms of assembly, homotetramer. FMNH2 is required as a cofactor.

It carries out the reaction 5-O-(1-carboxyvinyl)-3-phosphoshikimate = chorismate + phosphate. It functions in the pathway metabolic intermediate biosynthesis; chorismate biosynthesis; chorismate from D-erythrose 4-phosphate and phosphoenolpyruvate: step 7/7. Catalyzes the anti-1,4-elimination of the C-3 phosphate and the C-6 proR hydrogen from 5-enolpyruvylshikimate-3-phosphate (EPSP) to yield chorismate, which is the branch point compound that serves as the starting substrate for the three terminal pathways of aromatic amino acid biosynthesis. This reaction introduces a second double bond into the aromatic ring system. The polypeptide is Chorismate synthase (Thermoanaerobacter pseudethanolicus (strain ATCC 33223 / 39E) (Clostridium thermohydrosulfuricum)).